A 379-amino-acid chain; its full sequence is UDP-N-acetylglucosamine--N-acetylmuramyl-(pentapeptide) pyrophosphoryl-undecaprenol N-acetylglucosamine transferase (379 aa).

Residues 17–19, Asn-128, Arg-169, Ser-197, and Gln-298 contribute to the UDP-N-acetyl-alpha-D-glucosamine site; that span reads TGG.

This sequence belongs to the glycosyltransferase 28 family. MurG subfamily.

It localises to the cell inner membrane. The enzyme catalyses di-trans,octa-cis-undecaprenyl diphospho-N-acetyl-alpha-D-muramoyl-L-alanyl-D-glutamyl-meso-2,6-diaminopimeloyl-D-alanyl-D-alanine + UDP-N-acetyl-alpha-D-glucosamine = di-trans,octa-cis-undecaprenyl diphospho-[N-acetyl-alpha-D-glucosaminyl-(1-&gt;4)]-N-acetyl-alpha-D-muramoyl-L-alanyl-D-glutamyl-meso-2,6-diaminopimeloyl-D-alanyl-D-alanine + UDP + H(+). It participates in cell wall biogenesis; peptidoglycan biosynthesis. Its function is as follows. Cell wall formation. Catalyzes the transfer of a GlcNAc subunit on undecaprenyl-pyrophosphoryl-MurNAc-pentapeptide (lipid intermediate I) to form undecaprenyl-pyrophosphoryl-MurNAc-(pentapeptide)GlcNAc (lipid intermediate II). This is UDP-N-acetylglucosamine--N-acetylmuramyl-(pentapeptide) pyrophosphoryl-undecaprenol N-acetylglucosamine transferase from Brucella abortus (strain S19).